A 231-amino-acid chain; its full sequence is AA9 family lytic polysaccharide monooxygenase C (231 aa).

The first 18 residues, 1 to 18, serve as a signal peptide directing secretion; it reads MKSGLLFTTASLALTASA. His-19 is a Cu(2+) binding site. Cys-60 and Cys-179 are disulfide-bonded. Asn-69 and Asn-143 each carry an N-linked (GlcNAc...) asparagine glycan. Positions 165 and 174 each coordinate O2. Tyr-176 is a binding site for Cu(2+).

This sequence belongs to the polysaccharide monooxygenase AA9 family. Requires Cu(2+) as cofactor.

It is found in the secreted. The catalysed reaction is [(1-&gt;4)-beta-D-glucosyl]n+m + reduced acceptor + O2 = 4-dehydro-beta-D-glucosyl-[(1-&gt;4)-beta-D-glucosyl]n-1 + [(1-&gt;4)-beta-D-glucosyl]m + acceptor + H2O.. Its function is as follows. Lytic polysaccharide monooxygenase (LPMO) that depolymerizes crystalline and amorphous polysaccharides via the oxidation of scissile alpha- or beta-(1-4)-glycosidic bonds, yielding C1 oxidation products. Catalysis by LPMOs requires the reduction of the active-site copper from Cu(II) to Cu(I) by a reducing agent and H(2)O(2) or O(2) as a cosubstrate. The polypeptide is AA9 family lytic polysaccharide monooxygenase C (Emericella nidulans (strain FGSC A4 / ATCC 38163 / CBS 112.46 / NRRL 194 / M139) (Aspergillus nidulans)).